The following is a 158-amino-acid chain: Phosphopantetheine adenylyltransferase (158 aa).

A substrate-binding site is contributed by threonine 9. Residues 9–10 and histidine 17 contribute to the ATP site; that span reads TF. The substrate site is built by lysine 41, leucine 73, and arginine 87. ATP-binding positions include 88–90, glutamate 98, and 123–129; these read GVR and WSYVSST.

Belongs to the bacterial CoaD family. In terms of assembly, homohexamer. Mg(2+) is required as a cofactor.

Its subcellular location is the cytoplasm. It catalyses the reaction (R)-4'-phosphopantetheine + ATP + H(+) = 3'-dephospho-CoA + diphosphate. Its pathway is cofactor biosynthesis; coenzyme A biosynthesis; CoA from (R)-pantothenate: step 4/5. Reversibly transfers an adenylyl group from ATP to 4'-phosphopantetheine, yielding dephospho-CoA (dPCoA) and pyrophosphate. In Pasteurella multocida (strain Pm70), this protein is Phosphopantetheine adenylyltransferase.